Reading from the N-terminus, the 1174-residue chain is Carboxylic acid reductase (1174 aa).

Residues His-297, Ser-392, 413–414 (EG), Thr-418, Asp-491, 503–506 (YLDR), Lys-512, and Lys-612 contribute to the AMP site. Residues 651–726 (APVLVTVCRA…ALADYVEAAR (76 aa)) form the Carrier domain. The residue at position 685 (Ser-685) is an O-(pantetheine 4'-phosphoryl)serine. NADP(+) contacts are provided by residues 787 to 791 (TGFLG), Arg-814, Arg-824, 854 to 855 (DK), 880 to 882 (PAA), 919 to 920 (TS), Tyr-956, and Lys-960.

The protein belongs to the ATP-dependent AMP-binding enzyme family. Carboxylic acid reductase subfamily. Pantetheine 4'-phosphate serves as cofactor.

It catalyses the reaction a carboxylate + ATP + NADPH + H(+) = an aldehyde + AMP + diphosphate + NADP(+). Its function is as follows. Catalyzes the ATP- and NADPH-dependent reduction of carboxylic acids to the corresponding aldehydes. Catalyzes the reduction of a wide range of aliphatic fatty acids (C6-C18) into their corresponding aldehydes. Can also reduce benzoate to benzaldehyde. Has a preference for NADPH over NADH as the electron donor. This chain is Carboxylic acid reductase, found in Mycobacterium marinum (strain ATCC BAA-535 / M).